The chain runs to 189 residues: Phosphomevalonate kinase (189 aa).

Residues 10–16 and arginine 138 contribute to the ATP site; that span reads KRKCGKD. Asparagine 168 serves as a coordination point for substrate.

The protein localises to the cytoplasm. The protein resides in the cytosol. It carries out the reaction (R)-5-phosphomevalonate + ATP = (R)-5-diphosphomevalonate + ADP. It participates in isoprenoid biosynthesis; isopentenyl diphosphate biosynthesis via mevalonate pathway; isopentenyl diphosphate from (R)-mevalonate: step 2/3. In Drosophila melanogaster (Fruit fly), this protein is Phosphomevalonate kinase.